Consider the following 301-residue polypeptide: Securin (301 aa).

3 disordered regions span residues methionine 1–leucine 55, aspartate 82–leucine 120, and alanine 218–histidine 284. Residues arginine 33–leucine 36 carry the D-box 1 motif. Over residues serine 38–valine 50 the composition is skewed to polar residues. Residues arginine 52–leucine 55 carry the D-box 2 motif. 3 stretches are compositionally biased toward polar residues: residues glutamate 88–alanine 98, proline 110–proline 119, and valine 231–tyrosine 245. Repeats lie at residues alanine 250–serine 260 and alanine 270–serine 280.

The protein belongs to the securin family. In terms of assembly, interacts with the caspase-like cut1, and prevents its protease activity probably by covering its active site. Post-translationally, ubiquitinated by the anaphase promoting complex (APC) at the onset of anaphase, conducting to its degradation.

It localises to the cytoplasm. It is found in the nucleus. Its function is as follows. Regulatory protein, which plays a central role in chromosome stability. Probably acts by blocking the action of key proteins. During the mitosis, it blocks separase/cut1 function, preventing the proteolysis of the cohesin complex and the subsequent segregation of the chromosomes. At the onset of anaphase, it is ubiquitinated, conducting to its destruction and to the liberation of cut1. The chain is Securin (cut2) from Schizosaccharomyces pombe (strain 972 / ATCC 24843) (Fission yeast).